The following is a 318-amino-acid chain: Thymidylate synthase (318 aa).

Residues arginine 26 and 181-182 (RR) each bind dUMP. Cysteine 201 acts as the Nucleophile in catalysis. Residues 221–224 (RSAD), asparagine 232, and 262–264 (HIY) contribute to the dUMP site. (6R)-5,10-methylene-5,6,7,8-tetrahydrofolate is bound at residue aspartate 224. Alanine 317 is a (6R)-5,10-methylene-5,6,7,8-tetrahydrofolate binding site.

It belongs to the thymidylate synthase family. Bacterial-type ThyA subfamily. Homodimer.

The protein localises to the cytoplasm. It catalyses the reaction dUMP + (6R)-5,10-methylene-5,6,7,8-tetrahydrofolate = 7,8-dihydrofolate + dTMP. The protein operates within pyrimidine metabolism; dTTP biosynthesis. Catalyzes the reductive methylation of 2'-deoxyuridine-5'-monophosphate (dUMP) to 2'-deoxythymidine-5'-monophosphate (dTMP) while utilizing 5,10-methylenetetrahydrofolate (mTHF) as the methyl donor and reductant in the reaction, yielding dihydrofolate (DHF) as a by-product. This enzymatic reaction provides an intracellular de novo source of dTMP, an essential precursor for DNA biosynthesis. The polypeptide is Thymidylate synthase (Staphylococcus haemolyticus (strain JCSC1435)).